Reading from the N-terminus, the 224-residue chain is Uracil phosphoribosyltransferase (224 aa).

Arginine 92 provides a ligand contact to 5-phospho-alpha-D-ribose 1-diphosphate. Lysine 109 contacts GTP. 5-phospho-alpha-D-ribose 1-diphosphate-binding positions include arginine 117 and 145–153 (DPMLATGGT). Residues isoleucine 210 and 215 to 217 (GDA) each bind uracil. Aspartate 216 contributes to the 5-phospho-alpha-D-ribose 1-diphosphate binding site.

This sequence belongs to the UPRTase family. The cofactor is Mg(2+).

It carries out the reaction UMP + diphosphate = 5-phospho-alpha-D-ribose 1-diphosphate + uracil. It participates in pyrimidine metabolism; UMP biosynthesis via salvage pathway; UMP from uracil: step 1/1. Its activity is regulated as follows. Allosterically activated by GTP. Its function is as follows. Catalyzes the conversion of uracil and 5-phospho-alpha-D-ribose 1-diphosphate (PRPP) to UMP and diphosphate. This Nicotiana tabacum (Common tobacco) protein is Uracil phosphoribosyltransferase (UPP).